Here is a 374-residue protein sequence, read N- to C-terminus: Fe(2+) transport protein 1 (374 aa).

An N-terminal signal peptide occupies residues 1–33 (MATPRTLVPILPPVAALLLLLVAASSIPILAAA). Residues 34 to 62 (QPADACGGAPDQAAADGACHDVPRALRLK) are Extracellular-facing. The helical transmembrane segment at 63–83 (LIAIPTILVSSVVGVCLPLLS) threads the bilayer. Over 84–92 (RSVPALRPD) the chain is Cytoplasmic. Residues 93–113 (GGLFAVVKAFASGVILATGYM) form a helical membrane-spanning segment. Over 114 to 137 (HVLPDAFNNLTSPCLPRKPWSEFP) the chain is Extracellular. Residues 138–158 (FAAFVAMLAAVSTLMADSLML) form a helical membrane-spanning segment. At 159–219 (TYYNRSKPRP…ATQVQLRRNR (61 aa)) the chain is on the cytoplasmic side. Residues 166–199 (PRPSSGGDVAAVADHGESPDQGHRHGHGHGHGHG) form a disordered region. Residues 179–188 (DHGESPDQGH) show a composition bias toward basic and acidic residues. A helical membrane pass occupies residues 220 to 240 (VVVQVLEIGIVVHSVVIGLGM). At 241 to 251 (GASQNVCTIRP) the chain is on the extracellular side. Residues 252–272 (LVAAMCFHQMFEGMGLGGCIL) traverse the membrane as a helical segment. Over 273-282 (QAEYGRRMRS) the chain is Cytoplasmic. The helical transmembrane segment at 283–303 (VLVFFFSTTTPFGIALGLALT) threads the bilayer. The Extracellular segment spans residues 304-313 (RVYRDNSPTA). The chain crosses the membrane as a helical span at residues 314–334 (LIVVGLLNAASAGLLHYMALV). Residues 335–353 (ELLAADFMGPKLQGNVRLQ) lie on the Cytoplasmic side of the membrane. A helical membrane pass occupies residues 354–374 (LAAFLAVLLGAGGMSVMAKWA).

It belongs to the ZIP transporter (TC 2.A.5) family. As to expression, expressed in companion cells in the upper region of the root.

Its subcellular location is the cell membrane. In terms of biological role, iron transporter involved in the uptake of iron from the rhizosphere across the plasma membrane in the root epidermal layer. May also transport other divalent cations. The chain is Fe(2+) transport protein 1 (IRT1) from Oryza sativa subsp. japonica (Rice).